The following is a 227-amino-acid chain: GTP:AMP phosphotransferase AK3, mitochondrial (227 aa).

The GTP site is built by Gly17, Gly19, Lys20, Gly21, and Thr22. Lys20 bears the N6-succinyllysine mark. Residue Lys34 is modified to N6-acetyllysine. Ser37 is subject to Phosphoserine. The NMP stretch occupies residues 37 to 66 (SSGDLLRDNMLRGTEIGVLAKAFIDQGKLI). AMP is bound by residues Ser38 and Arg43. The residue at position 57 (Lys57) is an N6-succinyllysine. Lys64 is an AMP binding site. Residues Lys64 and Lys80 each carry the N6-acetyllysine; alternate modification. Lys64 and Lys80 each carry N6-succinyllysine; alternate. Residues Gly91, Arg94, and Gln98 each coordinate AMP. An LID region spans residues 127–164 (ARWIHPASGRVYNIEFNPPKTVGIDDLTGEPLIQREDD). Residues Arg128, Tyr138, Asn139, Arg161, and Arg172 each contribute to the GTP site. Lys174 and Lys189 each carry N6-acetyllysine; alternate. N6-succinyllysine; alternate occurs at positions 174 and 189. Thr201 is a binding site for GTP. Lys203 carries the post-translational modification N6-acetyllysine.

It belongs to the adenylate kinase family. AK3 subfamily. Monomer.

Its subcellular location is the mitochondrion matrix. The catalysed reaction is a ribonucleoside 5'-triphosphate + AMP = a ribonucleoside 5'-diphosphate + ADP. The enzyme catalyses GTP + AMP = GDP + ADP. It catalyses the reaction ITP + AMP = IDP + ADP. Its function is as follows. Mitochondrial adenylate kinase with a specific GTP:AMP phosphotransferase activity. Could also use ITP as phosphate donor. Its physiological function is to recycle GTP into GDP which is necessary for the TCA cycle in the mitochondrial matrix. This chain is GTP:AMP phosphotransferase AK3, mitochondrial, found in Pongo abelii (Sumatran orangutan).